The primary structure comprises 354 residues: Tryptophan--tRNA ligase (354 aa).

ATP-binding positions include 13–15 (QPT) and 21–22 (GN). A 'HIGH' region motif is present at residues 14-22 (PTGNLHLGN). D137 is a binding site for L-tryptophan. ATP contacts are provided by residues 149–151 (GDD), V208, and 217–221 (KMSKS). The 'KMSKS' region motif lies at 217–221 (KMSKS).

Belongs to the class-I aminoacyl-tRNA synthetase family. In terms of assembly, homodimer.

It is found in the cytoplasm. It catalyses the reaction tRNA(Trp) + L-tryptophan + ATP = L-tryptophyl-tRNA(Trp) + AMP + diphosphate + H(+). Functionally, catalyzes the attachment of tryptophan to tRNA(Trp). This chain is Tryptophan--tRNA ligase, found in Rhizobium meliloti (strain 1021) (Ensifer meliloti).